The following is a 212-amino-acid chain: Ribosomal RNA large subunit methyltransferase E (212 aa).

Residues Gly56, Trp58, Asp78, Asp94, and Asp117 each contribute to the S-adenosyl-L-methionine site. Lys157 functions as the Proton acceptor in the catalytic mechanism.

This sequence belongs to the class I-like SAM-binding methyltransferase superfamily. RNA methyltransferase RlmE family.

It localises to the cytoplasm. The enzyme catalyses uridine(2552) in 23S rRNA + S-adenosyl-L-methionine = 2'-O-methyluridine(2552) in 23S rRNA + S-adenosyl-L-homocysteine + H(+). Its function is as follows. Specifically methylates the uridine in position 2552 of 23S rRNA at the 2'-O position of the ribose in the fully assembled 50S ribosomal subunit. The polypeptide is Ribosomal RNA large subunit methyltransferase E (Ehrlichia chaffeensis (strain ATCC CRL-10679 / Arkansas)).